Consider the following 91-residue polypeptide: uncharacterized protein (91 aa).

Residues 50–70 (FGFFGGPFIGGLAGGLIGSAL) traverse the membrane as a helical segment.

It localises to the cell membrane. This is an uncharacterized protein from Bacillus subtilis (strain 168).